Consider the following 257-residue polypeptide: 5-oxoprolinase subunit A (257 aa).

It belongs to the LamB/PxpA family. In terms of assembly, forms a complex composed of PxpA, PxpB and PxpC.

The catalysed reaction is 5-oxo-L-proline + ATP + 2 H2O = L-glutamate + ADP + phosphate + H(+). Functionally, catalyzes the cleavage of 5-oxoproline to form L-glutamate coupled to the hydrolysis of ATP to ADP and inorganic phosphate. This Oceanobacillus iheyensis (strain DSM 14371 / CIP 107618 / JCM 11309 / KCTC 3954 / HTE831) protein is 5-oxoprolinase subunit A.